Reading from the N-terminus, the 476-residue chain is 2-(3-amino-3-carboxypropyl)histidine synthase subunit 2 (476 aa).

Polar residues predominate over residues 1–15; the sequence is MTESAPSAFFTTSTP. Residues 1 to 24 form a disordered region; it reads MTESAPSAFFTTSTPADHVHEEES. [4Fe-4S] cluster contacts are provided by Cys102, Cys123, and Cys347. The segment at 451-476 is disordered; the sequence is DGVSTAEDSTKMGEGRSGIAQGYSGK.

The protein belongs to the DPH1/DPH2 family. DPH2 subfamily. Component of the 2-(3-amino-3-carboxypropyl)histidine synthase complex composed of dph-1, dph-2, dph-3 and a NADH-dependent reductase. It depends on [4Fe-4S] cluster as a cofactor.

Its pathway is protein modification; peptidyl-diphthamide biosynthesis. Its function is as follows. Required for the first step of diphthamide biosynthesis, a post-translational modification of histidine which occurs in elongation factor 2. Dph-1 and dph-2 transfer a 3-amino-3-carboxypropyl (ACP) group from S-adenosyl-L-methionine (SAM) to a histidine residue, the reaction is assisted by a reduction system comprising dph-3 and a NADH-dependent reductase. Facilitates the reduction of the catalytic iron-sulfur cluster found in the dph-1 subunit. In Caenorhabditis elegans, this protein is 2-(3-amino-3-carboxypropyl)histidine synthase subunit 2 (dph-2).